A 225-amino-acid chain; its full sequence is Ribosomal RNA small subunit methyltransferase G (225 aa).

S-adenosyl-L-methionine-binding positions include Gly-69, 119–120, and Arg-136; that span reads AE.

The protein belongs to the methyltransferase superfamily. RNA methyltransferase RsmG family.

The protein resides in the cytoplasm. Functionally, specifically methylates the N7 position of a guanine in 16S rRNA. The protein is Ribosomal RNA small subunit methyltransferase G of Pseudothermotoga lettingae (strain ATCC BAA-301 / DSM 14385 / NBRC 107922 / TMO) (Thermotoga lettingae).